We begin with the raw amino-acid sequence, 207 residues long: 8-oxoguanine DNA glycosylase/AP lyase (207 aa).

Active-site residues include K129 and D147.

It belongs to the type-2 OGG1 family.

The catalysed reaction is 2'-deoxyribonucleotide-(2'-deoxyribose 5'-phosphate)-2'-deoxyribonucleotide-DNA = a 3'-end 2'-deoxyribonucleotide-(2,3-dehydro-2,3-deoxyribose 5'-phosphate)-DNA + a 5'-end 5'-phospho-2'-deoxyribonucleoside-DNA + H(+). In terms of biological role, catalyzes the excision of an oxidatively damaged form of guanine (7,8-dihydro-8-oxoguanine = 8-oxoG) from DNA. Also cleaves the DNA backbone at apurinic/apyrimidinic sites (AP sites). Has little specificity for the base opposite oxoG. This is 8-oxoguanine DNA glycosylase/AP lyase from Methanocaldococcus jannaschii (strain ATCC 43067 / DSM 2661 / JAL-1 / JCM 10045 / NBRC 100440) (Methanococcus jannaschii).